The sequence spans 412 residues: Protein Mb3436c (412 aa).

At K227 the chain carries N6-(pyridoxal phosphate)lysine.

The protein belongs to the DegT/DnrJ/EryC1 family.

The sequence is that of Protein Mb3436c from Mycobacterium bovis (strain ATCC BAA-935 / AF2122/97).